The chain runs to 412 residues: 46 kDa FK506-binding nuclear protein (412 aa).

3 stretches are compositionally biased toward acidic residues: residues 95–113, 169–178, and 188–216; these read EEDL…EEEA, GEDIDTDEND, and EGDD…EEEE. A disordered region spans residues 95–304; it reads EEDLEDEEEA…PVEKKEKKQI (210 aa). The span at 247 to 257 shows a compositional bias: basic residues; it reads KSQKRRLKKKL. Residues 271–303 are compositionally biased toward basic and acidic residues; sequence DKPKKEEPQQKAEKKKPEAKKEEAPVEKKEKKQ. The 89-residue stretch at 324 to 412 folds into the PPIase FKBP-type domain; the sequence is GKVVMVYYEG…VFEVDLKNVK (89 aa).

It belongs to the FKBP-type PPIase family. In terms of processing, phosphorylated by a nuclear kinase in the presence of Mg(2+) and ATP.

The protein resides in the nucleus. It carries out the reaction [protein]-peptidylproline (omega=180) = [protein]-peptidylproline (omega=0). Its activity is regulated as follows. Inhibited by both FK506 and rapamycin. Its function is as follows. PPIases accelerate the folding of proteins. It catalyzes the cis-trans isomerization of proline imidic peptide bonds in oligopeptides. Binds double-stranded DNA in vitro. In Spodoptera frugiperda (Fall armyworm), this protein is 46 kDa FK506-binding nuclear protein (FKBP46).